The following is a 209-amino-acid chain: Small ribosomal subunit protein uS4 (209 aa).

The region spanning 98–164 is the S4 RNA-binding domain; that stretch reads RRLDNVVYRL…LPIKNAIELN (67 aa).

It belongs to the universal ribosomal protein uS4 family. Part of the 30S ribosomal subunit. Contacts protein S5. The interaction surface between S4 and S5 is involved in control of translational fidelity.

One of the primary rRNA binding proteins, it binds directly to 16S rRNA where it nucleates assembly of the body of the 30S subunit. Functionally, with S5 and S12 plays an important role in translational accuracy. The protein is Small ribosomal subunit protein uS4 of Thermosipho melanesiensis (strain DSM 12029 / CIP 104789 / BI429).